The following is a 321-amino-acid chain: Porphobilinogen deaminase (321 aa).

The residue at position 246 (Cys-246) is an S-(dipyrrolylmethanemethyl)cysteine.

The protein belongs to the HMBS family. As to quaternary structure, monomer. The cofactor is dipyrromethane.

The catalysed reaction is 4 porphobilinogen + H2O = hydroxymethylbilane + 4 NH4(+). The protein operates within porphyrin-containing compound metabolism; protoporphyrin-IX biosynthesis; coproporphyrinogen-III from 5-aminolevulinate: step 2/4. Functionally, tetrapolymerization of the monopyrrole PBG into the hydroxymethylbilane pre-uroporphyrinogen in several discrete steps. The sequence is that of Porphobilinogen deaminase from Helicobacter hepaticus (strain ATCC 51449 / 3B1).